Consider the following 462-residue polypeptide: Semenogelin-1 (462 aa).

An N-terminal signal peptide occupies residues 1 to 23 (MKPNIIFVLSLLLILEKQAAVMG). Residue glutamine 24 is modified to Pyrrolidone carboxylic acid. The interval 24–61 (QKGGSKGRLPSEFSQFPHGQKGQHYSGQKGKQQTESKG) is disordered. The segment covering 46-61 (QHYSGQKGKQQTESKG) has biased composition (polar residues). 3 tandem repeats follow at residues 70-129 (HVDA…VVIH), 141-200 (NPSQ…QTEE), and 201-260 (LVAN…QDEL). Positions 70–439 (HVDANDHDQS…SHGGLDIVII (370 aa)) are repeat-rich region. Disordered regions lie at residues 131-157 (KGGK…GISS) and 173-194 (KEQT…QSSY). Over residues 138–157 (GTQNPSQDQGNSPSGKGISS) the composition is skewed to polar residues. Residues 164–283 (ERLWVHGLSK…NQDQQHGRKA (120 aa)) are interaction with EPPIN. Positions 261–380 (LVYNKNQHQT…QRSIYSQTEK (120 aa)) are 2 X 60 AA tandem repeats, type 1. The interval 270–432 (TKNLNQDQQH…KGRHQHGSHG (163 aa)) is disordered. Polar residues-rich tracts occupy residues 308 to 317 (DVSQSSIYSQ), 324 to 335 (GKSQKQITIPSQ), and 343 to 352 (ANKISYQSSS). The 3-2 repeat unit spans residues 381 to 439 (LVAGKSQIQAPNPKQEPWHGENAKGESGQSTNREQDLLSHEQKGRHQHGSHGGLDIVII). The span at 413–424 (REQDLLSHEQKG) shows a compositional bias: basic and acidic residues.

This sequence belongs to the semenogelin family. As to quaternary structure, occurs in disulfide-linked complexes which may also contain two less abundant 71- and 76-kDa semenogelin-related polypeptides. Interacts with EPPIN (via C-terminus); Cys-239 is a critical amino acid for both binding to EPPIN. In terms of processing, transglutaminase substrate. Rapidly cleaved after ejaculation by KLK3/PSA, resulting in liquefaction of the semen coagulum and the progressive release of motile spermatozoa. Seminal vesicle.

It is found in the secreted. Functionally, predominant protein in semen. It participates in the formation of a gel matrix entrapping the accessory gland secretions and ejaculated spermatozoa. Fragments of semenogelin and/or fragments of the related proteins may contribute to the activation of progressive sperm movements as the gel-forming proteins are fragmented by KLK3/PSA. Its function is as follows. Alpha-inhibin-92 and alpha-inhibin-31, derived from the proteolytic degradation of semenogelin, inhibit the secretion of pituitary follicle-stimulating hormone. This Homo sapiens (Human) protein is Semenogelin-1 (SEMG1).